A 154-amino-acid polypeptide reads, in one-letter code: MQKQIEIFTDGSCLGNPGAGGIGAVLRYKQHEKMLSKGYFKTTNNRMELRAVIEALNTLKEPCLITLYSDSQYMKNGITKWIFNWKKNNWKASSGKPVKNQDLWIALDESIQRHKINWQWVKGHAGHRENEICDELAKKGAENPTLEDMGYIEE.

In terms of domain architecture, RNase H type-1 spans methionine 1–glutamate 142. Mg(2+) is bound by residues aspartate 10, glutamate 48, aspartate 70, and aspartate 134.

This sequence belongs to the RNase H family. In terms of assembly, monomer. Requires Mg(2+) as cofactor.

The protein resides in the cytoplasm. The catalysed reaction is Endonucleolytic cleavage to 5'-phosphomonoester.. In terms of biological role, endonuclease that specifically degrades the RNA of RNA-DNA hybrids. This is Ribonuclease H from Haemophilus influenzae (strain 86-028NP).